A 151-amino-acid polypeptide reads, in one-letter code: Aspartate 1-decarboxylase (151 aa).

The active-site Schiff-base intermediate with substrate; via pyruvic acid is Ser-26. At Ser-26 the chain carries Pyruvic acid (Ser). A substrate-binding site is contributed by Thr-58. Residue Tyr-59 is the Proton donor of the active site. A substrate-binding site is contributed by Gly-74 to Ala-76.

The protein belongs to the PanD family. As to quaternary structure, heterooctamer of four alpha and four beta subunits. Pyruvate is required as a cofactor. Post-translationally, is synthesized initially as an inactive proenzyme, which is activated by self-cleavage at a specific serine bond to produce a beta-subunit with a hydroxyl group at its C-terminus and an alpha-subunit with a pyruvoyl group at its N-terminus.

It localises to the cytoplasm. The catalysed reaction is L-aspartate + H(+) = beta-alanine + CO2. Its pathway is cofactor biosynthesis; (R)-pantothenate biosynthesis; beta-alanine from L-aspartate: step 1/1. In terms of biological role, catalyzes the pyruvoyl-dependent decarboxylation of aspartate to produce beta-alanine. This is Aspartate 1-decarboxylase from Crocosphaera subtropica (strain ATCC 51142 / BH68) (Cyanothece sp. (strain ATCC 51142)).